Consider the following 104-residue polypeptide: MKRISFKVEDELARNLDKYSMQNHLTRSEAIRQILREKLSIMQIPTDKGKVVSGIIINDEIYECKYCHTRYLSHTGIVYHLEREHNIKKPFSPHIIKIVGDKNE.

The C2H2-type zinc finger occupies 62-85 (YECKYCHTRYLSHTGIVYHLEREH).

The sequence is that of Putative zinc finger protein ORF104b from Acidianus sp. F28 (AFV-2).